A 226-amino-acid polypeptide reads, in one-letter code: V-type proton ATPase subunit E (226 aa).

This sequence belongs to the V-ATPase E subunit family. V-ATPase is a heteromultimeric enzyme made up of two complexes: the ATP-hydrolytic V1 complex and the proton translocation V0 complex. The V1 complex consists of three catalytic AB heterodimers that form a heterohexamer, three peripheral stalks each consisting of EG heterodimers, one central rotor including subunits D and F, and the regulatory subunits C and H. The proton translocation complex V0 consists of the proton transport subunit a, a ring of proteolipid subunits c9c'', rotary subunit d, subunits e and f, and the accessory subunits VhaAC45 and ATP6AP2.

Subunit of the V1 complex of vacuolar(H+)-ATPase (V-ATPase), a multisubunit enzyme composed of a peripheral complex (V1) that hydrolyzes ATP and a membrane integral complex (V0) that translocates protons. V-ATPase is responsible for acidifying and maintaining the pH of intracellular compartments and in some cell types, is targeted to the plasma membrane, where it is responsible for acidifying the extracellular environment. The protein is V-type proton ATPase subunit E (Vha26) of Drosophila melanogaster (Fruit fly).